Reading from the N-terminus, the 137-residue chain is Small ribosomal subunit protein uS12 (137 aa).

Positions 33–57 (KVQTNVSSPQKRGVATRVGTMTPKK) are disordered. Aspartate 102 carries the 3-methylthioaspartic acid modification.

Belongs to the universal ribosomal protein uS12 family. Part of the 30S ribosomal subunit. Contacts proteins S8 and S17. May interact with IF1 in the 30S initiation complex.

Its function is as follows. With S4 and S5 plays an important role in translational accuracy. Functionally, interacts with and stabilizes bases of the 16S rRNA that are involved in tRNA selection in the A site and with the mRNA backbone. Located at the interface of the 30S and 50S subunits, it traverses the body of the 30S subunit contacting proteins on the other side and probably holding the rRNA structure together. The combined cluster of proteins S8, S12 and S17 appears to hold together the shoulder and platform of the 30S subunit. This chain is Small ribosomal subunit protein uS12, found in Streptococcus thermophilus (strain CNRZ 1066).